The following is a 358-amino-acid chain: Phospho-N-acetylmuramoyl-pentapeptide-transferase (358 aa).

The next 10 helical transmembrane spans lie at 26 to 46 (AIYA…WLID), 70 to 90 (GTPT…TLLW), 94 to 114 (TNVY…VGFV), 134 to 154 (MLWL…YPPF), 169 to 189 (ELGL…SNAV), 197 to 217 (GLAI…AYLA), 234 to 254 (AGEL…FLWF), 261 to 281 (VFMG…IAVI), 286 to 306 (IVLV…IVQV), and 335 to 355 (KIIV…LSTL).

The protein belongs to the glycosyltransferase 4 family. MraY subfamily. Requires Mg(2+) as cofactor.

Its subcellular location is the cell inner membrane. It catalyses the reaction UDP-N-acetyl-alpha-D-muramoyl-L-alanyl-gamma-D-glutamyl-meso-2,6-diaminopimeloyl-D-alanyl-D-alanine + di-trans,octa-cis-undecaprenyl phosphate = di-trans,octa-cis-undecaprenyl diphospho-N-acetyl-alpha-D-muramoyl-L-alanyl-D-glutamyl-meso-2,6-diaminopimeloyl-D-alanyl-D-alanine + UMP. Its pathway is cell wall biogenesis; peptidoglycan biosynthesis. Its function is as follows. Catalyzes the initial step of the lipid cycle reactions in the biosynthesis of the cell wall peptidoglycan: transfers peptidoglycan precursor phospho-MurNAc-pentapeptide from UDP-MurNAc-pentapeptide onto the lipid carrier undecaprenyl phosphate, yielding undecaprenyl-pyrophosphoryl-MurNAc-pentapeptide, known as lipid I. In Syntrophotalea carbinolica (strain DSM 2380 / NBRC 103641 / GraBd1) (Pelobacter carbinolicus), this protein is Phospho-N-acetylmuramoyl-pentapeptide-transferase.